Reading from the N-terminus, the 244-residue chain is Uridylate kinase (244 aa).

Lysine 18–glycine 21 contributes to the ATP binding site. Residues glycine 26–glycine 31 are involved in allosteric activation by GTP. Glycine 60 is a binding site for UMP. Positions 61 and 65 each coordinate ATP. Residues aspartate 80 and threonine 141–threonine 148 each bind UMP. Residues threonine 168, tyrosine 174, and aspartate 177 each coordinate ATP.

Belongs to the UMP kinase family. In terms of assembly, homohexamer.

Its subcellular location is the cytoplasm. The catalysed reaction is UMP + ATP = UDP + ADP. It participates in pyrimidine metabolism; CTP biosynthesis via de novo pathway; UDP from UMP (UMPK route): step 1/1. With respect to regulation, allosterically activated by GTP. Inhibited by UTP. Functionally, catalyzes the reversible phosphorylation of UMP to UDP. The chain is Uridylate kinase from Paracoccus denitrificans (strain Pd 1222).